The following is a 125-amino-acid chain: Large ribosomal subunit protein uL22c (125 aa).

The protein belongs to the universal ribosomal protein uL22 family. Part of the 50S ribosomal subunit.

The protein localises to the plastid. It localises to the chloroplast. Its function is as follows. This protein binds specifically to 23S rRNA. In terms of biological role, the globular domain of the protein is located near the polypeptide exit tunnel on the outside of the subunit, while an extended beta-hairpin is found that lines the wall of the exit tunnel in the center of the 70S ribosome. The protein is Large ribosomal subunit protein uL22c (rpl22) of Huperzia lucidula (Shining clubmoss).